Reading from the N-terminus, the 722-residue chain is Protein HAPLESS 2-A (722 aa).

An N-terminal signal peptide occupies residues 1-24 (MPRRRGTPLPTILLLLAFVGGACG). The Extracellular segment spans residues 25 to 552 (TEILSKSRLE…LFDFGCHIQY (528 aa)). Disulfide bonds link cysteine 36/cysteine 48, cysteine 129/cysteine 159, cysteine 141/cysteine 188, cysteine 160/cysteine 315, cysteine 162/cysteine 171, cysteine 298/cysteine 322, and cysteine 435/cysteine 473. The chain crosses the membrane as a helical span at residues 553–573 (VCIGWILLLLLIPAAVVFLWL). The Cytoplasmic portion of the chain corresponds to 574 to 722 (LHQEGLFDPL…HRDGHYSPSV (149 aa)). Positions 598–641 (RRRHQKGRHHRHHHDHRHRHGHSHGDHHHHYHGGHHQRRRHHHP) are enriched in basic residues. Disordered regions lie at residues 598–665 (RRRH…RNHH) and 680–722 (RLDR…SPSV). The span at 646-662 (VEGHHHDRQQHSHEAGR) shows a compositional bias: basic and acidic residues. Positions 701–711 (RRSRHERHGGH) are enriched in basic residues. Basic and acidic residues predominate over residues 712-722 (GHRDGHYSPSV).

This sequence belongs to the HAP2/GCS1 family.

The protein localises to the endoplasmic reticulum membrane. It localises to the cell membrane. Required for male fertility. Plays a role in pollen tube guidance and successful gamete attachment. Essential for the fusion of gametes during double fertilization, where one male gamete fuses with the egg to produce a zygote, and another male gamete fuses with the central cell to produce the endosperm. Mediates the fusion of cell membranes. Not required for pollen tube outgrowth. The protein is Protein HAPLESS 2-A (HAP2A) of Oryza sativa subsp. japonica (Rice).